Here is a 1056-residue protein sequence, read N- to C-terminus: ISWI chromatin-remodeling complex ATPase CHR11 (1056 aa).

Positions Met1–Ala10 are enriched in low complexity. 2 disordered regions span residues Met1–Glu80 and Lys133–Asn175. Acidic residues-rich tracts occupy residues Phe11 to Glu32 and Pro60 to Lys73. The stretch at Ser12–Ser105 forms a coiled coil. The segment covering Lys141 to Ser151 has biased composition (basic residues). Residues Glu155–Gly169 are compositionally biased toward acidic residues. The region spanning Ile201–Glu366 is the Helicase ATP-binding domain. Asp214–Thr221 contacts ATP. The DEAH box signature appears at Asp317–His320. In terms of domain architecture, Helicase C-terminal spans Leu494–Ala645. Disordered stretches follow at residues Trp738–Pro774 and Ile814–Glu833. Residues Asp815–Glu833 are compositionally biased toward acidic residues. 2 consecutive SANT domains span residues Glu840–Lys892 and Gln941–Ile1002. The segment at Glu1011–Arg1056 is disordered. A compositionally biased stretch (basic residues) spans Thr1047–Arg1056.

This sequence belongs to the SNF2/RAD54 helicase family. ISWI subfamily. As to quaternary structure, interacts with RLT1 and RLT2. Interacts (via C-terminus) with RLT1 (via the DDT domain), RLT2 (via the DDT domain), PTM (via the DDT domain) and DDR4 (via the DDT domain). Binds to FGT1. In terms of tissue distribution, highly expressed in growing tissues such as inflorescence and flower meristems, young leaves and floral organs. Expressed in roots, rosette and cauline leaves, stems, flowers, inflorescences and siliques.

Its subcellular location is the nucleus. In terms of biological role, possesses intrinsic ATP-dependent nucleosome-remodeling activity. Constitutes the catalytic subunit of several complexes capable of forming ordered nucleosome arrays on chromatin. Involved in the formation of nucleosome distribution patterns. Involved in nuclear proliferation during megagametogenesis and cell expansion in the sporophyte. Required for the maintenance of the plant vegetative phase. In association with RLT1 or RLT2 may prevent the early activation of the vegetative-to-reproductive transition by regulating key genes that contribute to flower timing, such as FT, SEP1, SEP3, AGL8/FUL, SOC1 and FLC. Necessary to acquire heat stress (HS) memory. The chain is ISWI chromatin-remodeling complex ATPase CHR11 from Arabidopsis thaliana (Mouse-ear cress).